Consider the following 600-residue polypeptide: Arginine--tRNA ligase (600 aa).

The short motif at 132–142 (ANPTGPLHVGH) is the 'HIGH' region element.

Belongs to the class-I aminoacyl-tRNA synthetase family. Monomer.

It localises to the cytoplasm. It catalyses the reaction tRNA(Arg) + L-arginine + ATP = L-arginyl-tRNA(Arg) + AMP + diphosphate. In Ralstonia nicotianae (strain ATCC BAA-1114 / GMI1000) (Ralstonia solanacearum), this protein is Arginine--tRNA ligase.